Reading from the N-terminus, the 719-residue chain is Delta-1-pyrroline-5-carboxylate synthase (719 aa).

The segment at 1–293 (MDATRAFVKD…WVQVKETGVR (293 aa)) is glutamate 5-kinase. Substrate contacts are provided by Ser57, Asp154, and Asn173. ATP is bound by residues 193-194 (SD) and 233-239 (RGGMTAK). Residues 294–719 (DMAVAARESS…KDLPLVAQNS (426 aa)) form a gamma-glutamyl phosphate reductase region.

In the N-terminal section; belongs to the glutamate 5-kinase family. The protein in the C-terminal section; belongs to the gamma-glutamyl phosphate reductase family. Expressed at high levels in leaves and is inducible in roots subjected to salt stress.

The enzyme catalyses L-glutamate + ATP = L-glutamyl 5-phosphate + ADP. The catalysed reaction is L-glutamate 5-semialdehyde + phosphate + NADP(+) = L-glutamyl 5-phosphate + NADPH + H(+). It functions in the pathway amino-acid biosynthesis; L-proline biosynthesis; L-glutamate 5-semialdehyde from L-glutamate: step 1/2. The protein operates within amino-acid biosynthesis; L-proline biosynthesis; L-glutamate 5-semialdehyde from L-glutamate: step 2/2. With respect to regulation, feedback regulated by proline. Its function is as follows. P5CS plays a key role in proline biosynthesis, leading to osmoregulation in plants. This Mesembryanthemum crystallinum (Common ice plant) protein is Delta-1-pyrroline-5-carboxylate synthase (P5CS).